We begin with the raw amino-acid sequence, 364 residues long: Chorismate synthase (364 aa).

NADP(+) is bound by residues R47 and R53. FMN is bound by residues 124–126 (RSS), G286, 301–305 (KPTAT), and R327.

Belongs to the chorismate synthase family. Homotetramer. Requires FMNH2 as cofactor.

It catalyses the reaction 5-O-(1-carboxyvinyl)-3-phosphoshikimate = chorismate + phosphate. The protein operates within metabolic intermediate biosynthesis; chorismate biosynthesis; chorismate from D-erythrose 4-phosphate and phosphoenolpyruvate: step 7/7. Functionally, catalyzes the anti-1,4-elimination of the C-3 phosphate and the C-6 proR hydrogen from 5-enolpyruvylshikimate-3-phosphate (EPSP) to yield chorismate, which is the branch point compound that serves as the starting substrate for the three terminal pathways of aromatic amino acid biosynthesis. This reaction introduces a second double bond into the aromatic ring system. The polypeptide is Chorismate synthase (Acaryochloris marina (strain MBIC 11017)).